Here is a 123-residue protein sequence, read N- to C-terminus: Large ribosomal subunit protein bL12 (123 aa).

The protein belongs to the bacterial ribosomal protein bL12 family. In terms of assembly, homodimer. Part of the ribosomal stalk of the 50S ribosomal subunit. Forms a multimeric L10(L12)X complex, where L10 forms an elongated spine to which 2 to 4 L12 dimers bind in a sequential fashion. Binds GTP-bound translation factors.

Functionally, forms part of the ribosomal stalk which helps the ribosome interact with GTP-bound translation factors. Is thus essential for accurate translation. This Clostridium kluyveri (strain NBRC 12016) protein is Large ribosomal subunit protein bL12.